Consider the following 137-residue polypeptide: MKHWFFLIILFFMNCSWGQDPFDKTQRNRSQFDNAQTVMEQTEIISSDVPNNLCGADENRQAAEIPLNALKLVGVVISKDKAFALLQDQGLQVYSVLEGVDVAQEGYIVEKINQNNVQFMRKLGEQCDSSEWKKLSF.

In terms of biological role, involved in transformation (genetic competence for DNA uptake). The chain is Competence protein D (comD) from Haemophilus influenzae (strain ATCC 51907 / DSM 11121 / KW20 / Rd).